Consider the following 378-residue polypeptide: Ribosomal RNA large subunit methyltransferase G (378 aa).

This sequence belongs to the methyltransferase superfamily. RlmG family.

Its subcellular location is the cytoplasm. It catalyses the reaction guanosine(1835) in 23S rRNA + S-adenosyl-L-methionine = N(2)-methylguanosine(1835) in 23S rRNA + S-adenosyl-L-homocysteine + H(+). Its function is as follows. Specifically methylates the guanine in position 1835 (m2G1835) of 23S rRNA. The polypeptide is Ribosomal RNA large subunit methyltransferase G (Salmonella paratyphi B (strain ATCC BAA-1250 / SPB7)).